Here is a 96-residue protein sequence, read N- to C-terminus: ASNSD1 upstream open reading frame protein (96 aa).

A compositionally biased stretch (basic and acidic residues) spans 1–10 (MPSRGTRPED). The tract at residues 1-28 (MPSRGTRPEDSSVLIPTDNSTPHKEDLS) is disordered. Residues 23 to 96 (HKEDLSSKIK…ENLDKTKIKK (74 aa)) adopt a coiled-coil conformation.

As to quaternary structure, component of the PAQosome complex which is responsible for the biogenesis of several protein complexes and which consists of R2TP complex members RUVBL1, RUVBL2, RPAP3 and PIH1D1, URI complex members PFDN2, PFDN6, PDRG1, UXT and URI1 as well as ASDURF, POLR2E and DNAAF10/WDR92.

The protein localises to the cytoplasm. The polypeptide is ASNSD1 upstream open reading frame protein (Homo sapiens (Human)).